We begin with the raw amino-acid sequence, 652 residues long: Chaperone protein HtpG (652 aa).

Residues 1–351 (MTEHVEQLEF…AQDLSLNVSR (351 aa)) are a; substrate-binding. The interval 352–568 (EILQQDRQIQ…VFDFTPMLER (217 aa)) is b. A c region spans residues 569–652 (MYRASGQPVP…ILTDRLTRTL (84 aa)).

This sequence belongs to the heat shock protein 90 family. As to quaternary structure, homodimer.

The protein localises to the cytoplasm. Functionally, molecular chaperone. Has ATPase activity. The sequence is that of Chaperone protein HtpG from Nocardia farcinica (strain IFM 10152).